We begin with the raw amino-acid sequence, 90 residues long: Small ribosomal subunit protein bS16 (90 aa).

The protein belongs to the bacterial ribosomal protein bS16 family.

The protein is Small ribosomal subunit protein bS16 of Fervidobacterium nodosum (strain ATCC 35602 / DSM 5306 / Rt17-B1).